Consider the following 1507-residue polypeptide: Protein similar (1507 aa).

Residues 1 to 85 are disordered; sequence MVSLIDTIEA…KSRDAARCRR (85 aa). Low complexity predominate over residues 26–49; it reads SASSSSCSSSFSSSPPSSSVGSPS. Basic and acidic residues predominate over residues 72 to 85; the sequence is KRKEKSRDAARCRR. Residues 72 to 125 enclose the bHLH domain; it reads KRKEKSRDAARCRRSKETEIFMELSAALPLKTDDVNQLDKASVMRITIAFLKIR. PAS domains follow at residues 167–240 and 307–377; these read NGAE…LAQK and PHPS…LSKG. Positions 381-422 constitute a PAC domain; the sequence is TSRYRFLGKYGGYCWILSQATIVYDKLKPQSVVCVNYVISNL. Disordered regions lie at residues 433 to 459, 541 to 588, 706 to 832, and 900 to 951; these read QQTA…KAAD, HSPG…PPPT, TCST…CSPN, and YAGN…QAAV. Positions 439 to 459 are enriched in basic and acidic residues; it reads EQKEQHHQAAETEKEPEKAAD. The span at 548–559 shows a compositional bias: polar residues; it reads ITAQLLSGSSSG. A compositionally biased stretch (pro residues) spans 578–588; it reads SPAPPLTPPPT. The segment at 692-863 is ODD; it reads TCLLPEDINS…IDDDMPLLTE (172 aa). Over residues 706–717 the composition is skewed to polar residues; it reads TCSTTASGQHYQ. 2 stretches are compositionally biased toward low complexity: residues 718–745 and 754–777; these read SPSS…LSPL and SNPS…QQQH. The segment covering 803–818 has biased composition (polar residues); sequence DTSCSQHLHSPSITSK. Composition is skewed to low complexity over residues 823–832, 907–918, and 926–951; these read SSLPSLCSPN, QQQQQQPQLQQQ, and SSPA…QAAV. A coiled-coil region spans residues 880 to 908; the sequence is KEIDAIQQQLQQLQQQHHQQYAGNTGYQQ. Coiled-coil stretches lie at residues 982–1054 and 1110–1162; these read AEEC…YDVQ and QLLQ…QLQQ. Disordered stretches follow at residues 1204–1228, 1251–1287, and 1356–1460; these read PQQQ…VESK, KDPA…QSNS, and FGGS…KTSI. The segment covering 1413–1423 has biased composition (polar residues); sequence SSTSNSTNQAE.

As to quaternary structure, efficient DNA binding requires dimerization with another bHLH protein. Interacts with Vhl. In terms of tissue distribution, ubiquitously expressed in the embryo.

It is found in the cytoplasm. The protein resides in the nucleus. In terms of biological role, functions as a transcriptional regulator of the adaptive response to hypoxia. Binds to core DNA sequence 5'-[AG]CGTG-3' within the hypoxia response element (HRE) of target gene promoters. This Drosophila melanogaster (Fruit fly) protein is Protein similar (sima).